Reading from the N-terminus, the 597-residue chain is METVDSRNKLHSRLRLWEFPDQYIIEPADGSGSSCLDISRVDASMKLIDQVPESNSVRVPKIRSIFGVVGMLKLLAGSYLVVVTESERVGSFLGHPIFKVTTLKVLPCDHSLKNSPEEQKKMETEFSKLLSVAEKTTGLYFSYEVNLTLSSQRLHEMGDESKSLPLWRQAEPRFLWNNYMLEVLIDNKLDQFLLPVIQGSFNSFETAIGRDIVDITLIARRCTRRNGTRMWRRGADLDGYVANFVETEQIVQMNGYTSSFVQVRGSMPFMWEQVVDLTYKPKFEIVQPEEAKRIAERHFLDLRKKYGSVLAVDLVNKQGGEGRLCEKYATVMQHITGDDIRYLHFDFHQICGHIHFERLSILYEQIEGFLEKNGYFLLNEKGEKMKEQLGVVRSNCIDCLDRTNVTQSMIGRKMLEVQLKRIGVFGAEETISSHLNFDEHYKILWANHGDEISIQYSGTPALKGDFVRYGHRTAHGVLKDGWSSLRRYYLNNFADGTKQDAIDLLQGHYIVAVSRDMAPVPQKGGLEAVANFPVALFVVLMSFWFATMSLKQTGSDYKHKHLFFSLLWTGICVGMAALVRANGRIFCNRPRLHKPRG.

Positions Leu130–Gly458 constitute an SAC domain. A Phosphatase catalytic core motif is present at residues Arg393–Asn404. 2 helical membrane-spanning segments follow: residues Ala528 to Met548 and His559 to Val579.

As to expression, ubiquitous.

It is found in the endoplasmic reticulum membrane. Its subcellular location is the cytoplasmic vesicle membrane. Phosphoinositide phosphatase that preferentially hydrolyzes PtdIns(4)P. Regulates the accumulation of PtdIns(4)P on membrane compartments at the tips of growing root hairs leading to proper root hair development. The protein is Phosphoinositide phosphatase SAC7 (SAC7) of Arabidopsis thaliana (Mouse-ear cress).